A 500-amino-acid chain; its full sequence is Maturase K (500 aa).

It belongs to the intron maturase 2 family. MatK subfamily.

The protein localises to the plastid. It is found in the chloroplast. In terms of biological role, usually encoded in the trnK tRNA gene intron. Probably assists in splicing its own and other chloroplast group II introns. The protein is Maturase K of Helianthus annuus (Common sunflower).